Here is a 195-residue protein sequence, read N- to C-terminus: Probable septum site-determining protein MinC (195 aa).

It belongs to the MinC family. As to quaternary structure, interacts with MinD and FtsZ.

Functionally, cell division inhibitor that blocks the formation of polar Z ring septums. Rapidly oscillates between the poles of the cell to destabilize FtsZ filaments that have formed before they mature into polar Z rings. Prevents FtsZ polymerization. This Helicobacter pylori (strain P12) protein is Probable septum site-determining protein MinC.